The chain runs to 270 residues: Phosphoserine phosphatase (270 aa).

The active-site Nucleophile is the Asp67. Mg(2+) contacts are provided by Asp67 and Asp69. Asp69 acts as the Proton donor in catalysis. Substrate-binding positions include Glu76, Arg112, Ser156–Gly157, and Lys205. Mg(2+) is bound at residue Asp227.

Belongs to the HAD-like hydrolase superfamily. SerB family. Mg(2+) serves as cofactor.

It carries out the reaction O-phospho-L-serine + H2O = L-serine + phosphate. The catalysed reaction is O-phospho-D-serine + H2O = D-serine + phosphate. Its pathway is amino-acid biosynthesis; L-serine biosynthesis; L-serine from 3-phospho-D-glycerate: step 3/3. Catalyzes the last step in the biosynthesis of serine from carbohydrates. The reaction mechanism proceeds via the formation of a phosphoryl-enzyme intermediates. This Drosophila melanogaster (Fruit fly) protein is Phosphoserine phosphatase (aay).